The primary structure comprises 207 residues: Putative 3-methyladenine DNA glycosylase (207 aa).

This sequence belongs to the DNA glycosylase MPG family.

The sequence is that of Putative 3-methyladenine DNA glycosylase from Listeria monocytogenes serotype 4a (strain HCC23).